The sequence spans 156 residues: Protein-export protein SecB (156 aa).

It belongs to the SecB family. As to quaternary structure, homotetramer, a dimer of dimers. One homotetramer interacts with 1 SecA dimer.

It localises to the cytoplasm. Functionally, one of the proteins required for the normal export of preproteins out of the cell cytoplasm. It is a molecular chaperone that binds to a subset of precursor proteins, maintaining them in a translocation-competent state. It also specifically binds to its receptor SecA. In Paraburkholderia phymatum (strain DSM 17167 / CIP 108236 / LMG 21445 / STM815) (Burkholderia phymatum), this protein is Protein-export protein SecB.